The primary structure comprises 670 residues: Pescadillo homolog (670 aa).

Residues 292–321 (GANQAQAKVKEAESKRSLMEEELLKVRELF) are a coiled coil. In terms of domain architecture, BRCT spans 316-402 (KVRELFRGLT…QMLPVTGYRI (87 aa)). Positions 643-670 (RQRAEAKGKKLKEKKADNPYKKLPKWVQ) are disordered. The segment covering 644–662 (QRAEAKGKKLKEKKADNPY) has biased composition (basic and acidic residues).

The protein belongs to the pescadillo family.

It is found in the nucleus. It localises to the nucleolus. The protein resides in the nucleoplasm. In terms of biological role, required for maturation of ribosomal RNAs and formation of the large ribosomal subunit. The polypeptide is Pescadillo homolog (Leishmania braziliensis).